A 236-amino-acid polypeptide reads, in one-letter code: Calcium-binding lectin RapA2 (236 aa).

The protein localises to the secreted. Interacts specifically in a calcium-dependent manner with the acidic exopolysaccharide (EPS) and capsular polysaccharide produced by R.leguminosarum. Could be involved in the development of the biofilm matrix made of EPS. The chain is Calcium-binding lectin RapA2 from Rhizobium johnstonii (strain DSM 114642 / LMG 32736 / 3841) (Rhizobium leguminosarum bv. viciae).